A 301-amino-acid chain; its full sequence is Ubiquinone biosynthesis protein COQ4, mitochondrial (301 aa).

Residues 1-46 (MEVTLKRSAALARQTTPLLRPLRPVATYPSNNNNNNNPTPQQRRPY) constitute a mitochondrion transit peptide. Residues 14-48 (QTTPLLRPLRPVATYPSNNNNNNNPTPQQRRPYSL) form a disordered region. The span at 38–48 (PTPQQRRPYSL) shows a compositional bias: polar residues. Residues histidine 185, aspartate 186, histidine 189, and glutamate 201 each coordinate Zn(2+).

Belongs to the COQ4 family. In terms of assembly, component of a multi-subunit COQ enzyme complex, composed of at least COQ3, COQ4, COQ5, COQ6, COQ7 and COQ9. The cofactor is Zn(2+).

The protein resides in the mitochondrion inner membrane. It catalyses the reaction a 4-hydroxy-3-methoxy-5-(all-trans-polyprenyl)benzoate + H(+) = a 2-methoxy-6-(all-trans-polyprenyl)phenol + CO2. Its pathway is cofactor biosynthesis; ubiquinone biosynthesis. Lyase that catalyzes the C1-decarboxylation of 4-hydroxy-3-methoxy-5-(all-trans-polyprenyl)benzoic acid into 2-methoxy-6-(all-trans-polyprenyl)phenol during ubiquinone biosynthesis. In Podospora anserina (strain S / ATCC MYA-4624 / DSM 980 / FGSC 10383) (Pleurage anserina), this protein is Ubiquinone biosynthesis protein COQ4, mitochondrial.